A 238-amino-acid polypeptide reads, in one-letter code: MTPHINAPAGAFADVVLMPGDPLRAKYIAETFLQDVKEITNVRNMLGFTGTYKGRKISVMGHGMGIPSCSIYTKELITEYGVKKIIRVGSCGAVRMDVKLRDVVIGFGACTDSKVNRIRFKNHDFAAIADFDMTMAAVQAAKAKGLNVHVGNLFSADLFYTPDVEMFDVMEKYGILGVEMEAAGIYGVAAEFGAKALTICTVSDHIRTHEQTTPEERQLTFNDMIEIALESVLIGDNA.

Residue His4 participates in a purine D-ribonucleoside binding. Residues Gly20, Arg24, Arg43, and 87 to 90 (RVGS) contribute to the phosphate site. Residues 179 to 181 (EME) and 203 to 204 (SD) each bind a purine D-ribonucleoside. Asp204 (proton donor) is an active-site residue.

It belongs to the PNP/UDP phosphorylase family. As to quaternary structure, homohexamer; trimer of homodimers.

The catalysed reaction is a purine D-ribonucleoside + phosphate = a purine nucleobase + alpha-D-ribose 1-phosphate. It catalyses the reaction a purine 2'-deoxy-D-ribonucleoside + phosphate = a purine nucleobase + 2-deoxy-alpha-D-ribose 1-phosphate. Its function is as follows. Catalyzes the reversible phosphorolytic breakdown of the N-glycosidic bond in the beta-(deoxy)ribonucleoside molecules, with the formation of the corresponding free purine bases and pentose-1-phosphate. The chain is Purine nucleoside phosphorylase DeoD-type from Pasteurella multocida (strain Pm70).